A 2157-amino-acid polypeptide reads, in one-letter code: Mediator of RNA polymerase II transcription subunit 12-like protein (2157 aa).

Positions 1–31 (MAAFGLLSYEQRPLKRPRLGPPDVYPQDPKQ) are disordered. At T462 the chain carries Phosphothreonine. The span at 1437 to 1456 (ELEKGQHLGSSSKKERDRQK) shows a compositional bias: basic and acidic residues. 3 disordered regions span residues 1437–1461 (ELEK…KSMS), 1724–1807 (RSYY…SQMT), and 2040–2157 (IDAV…PSHF). Residues 1771–1780 (TKGRKRKTKS) are compositionally biased toward basic residues. Composition is skewed to low complexity over residues 2063-2076 (PRQQ…RLLQ), 2083-2101 (QQPQ…QSQA), and 2116-2136 (RQGL…RQLQ). Residues 2137–2148 (KQLSSNQPQQGV) show a composition bias toward polar residues.

This sequence belongs to the Mediator complex subunit 12 family. As to quaternary structure, may be a component of the Mediator complex, which is known to be composed of MED1, MED4, MED6, MED7, MED8, MED9, MED10, MED11, MED12, MED13, MED13L, MED14, MED15, MED16, MED17, MED18, MED19, MED20, MED21, MED22, MED23, MED24, MED25, MED26, MED27, MED29, MED30, MED31, CCNC, CDK8 and CDC2L6/CDK11. The MED12, MED13, CCNC and CDK8 subunits form a distinct module termed the CDK8 module. Mediator containing the CDK8 module is less active than Mediator lacking this module in supporting transcriptional activation. Individual preparations of the Mediator complex lacking one or more distinct subunits have been variously termed ARC, CRSP, DRIP, PC2, SMCC and TRAP.

The protein localises to the nucleus. In terms of biological role, may be a component of the Mediator complex, a coactivator involved in the regulated transcription of nearly all RNA polymerase II-dependent genes. Mediator functions as a bridge to convey information from gene-specific regulatory proteins to the basal RNA polymerase II transcription machinery. Mediator is recruited to promoters by direct interactions with regulatory proteins and serves as a scaffold for the assembly of a functional preinitiation complex with RNA polymerase II and the general transcription factors. The protein is Mediator of RNA polymerase II transcription subunit 12-like protein (Med12l) of Mus musculus (Mouse).